The following is a 308-amino-acid chain: PHO85 cyclin-2 (308 aa).

The 129-residue stretch at 18 to 146 folds into the Cyclin N-terminal domain; that stretch reads EMVQYLASTT…LLEYFDWDVT (129 aa). The tract at residues 248-270 is disordered; the sequence is SPRTYNIDSKHDNKENRPIPTIK. Residues 255–264 are compositionally biased toward basic and acidic residues; it reads DSKHDNKENR.

The protein belongs to the cyclin family. PCL1,2 subfamily. As to quaternary structure, forms a cyclin-CDK complex with PHO85. Interacts with RVS167.

Its subcellular location is the cytoplasm. It localises to the nucleus. G1/S-specific cyclin partner of the cyclin-dependent kinase (CDK) PHO85. Essential for the control of the cell cycle at the G1/S (start) transition. Together with cyclin PCL1, positively controls degradation of sphingoid long chain base kinase LCB4. The PCL2-PHO85 cyclin-CDK holoenzyme phosphorylates LCB4, which is required for its ubiquitination and degradation. PCL2-PHO85 also phosphorylates RVS167, linking cyclin-CDK activity with organization of the actin cytoskeleton. This Saccharomyces cerevisiae (strain ATCC 204508 / S288c) (Baker's yeast) protein is PHO85 cyclin-2 (PCL2).